A 146-amino-acid chain; its full sequence is Prostaglandin E synthase 3 (146 aa).

The CS domain occupies 1–76; the sequence is VFIEFCVEDS…ESGQAWPRLT (76 aa). The disordered stretch occupies residues 110 to 146; that stretch reads SEMMNNMGGDDDVDLPEVDGADDDSPDSDDEKMPDLE. Over residues 118–139 the composition is skewed to acidic residues; it reads GDDDVDLPEVDGADDDSPDSDD.

The protein belongs to the p23/wos2 family. Binds to telomerase. Binds to the progesterone receptor.

It localises to the cytoplasm. The enzyme catalyses prostaglandin H2 = prostaglandin E2. The protein operates within lipid metabolism; prostaglandin biosynthesis. In terms of biological role, molecular chaperone. The polypeptide is Prostaglandin E synthase 3 (PTGES3) (Gallus gallus (Chicken)).